The following is a 222-amino-acid chain: Ribosomal RNA small subunit methyltransferase I (222 aa).

It belongs to the methyltransferase superfamily. RsmI family.

The protein resides in the cytoplasm. It carries out the reaction cytidine(1402) in 16S rRNA + S-adenosyl-L-methionine = 2'-O-methylcytidine(1402) in 16S rRNA + S-adenosyl-L-homocysteine + H(+). Catalyzes the 2'-O-methylation of the ribose of cytidine 1402 (C1402) in 16S rRNA. The protein is Ribosomal RNA small subunit methyltransferase I of Thermotoga maritima (strain ATCC 43589 / DSM 3109 / JCM 10099 / NBRC 100826 / MSB8).